A 437-amino-acid polypeptide reads, in one-letter code: Adenosylhomocysteinase (437 aa).

Substrate-binding residues include Thr-58, Asp-133, and Glu-158. 159 to 161 (TTT) is a binding site for NAD(+). The substrate site is built by Lys-188 and Asp-192. NAD(+)-binding positions include Asn-193, 224-229 (GDVGKG), Glu-245, 301-303 (VGH), and Asn-348.

The protein belongs to the adenosylhomocysteinase family. As to quaternary structure, homotetramer. NAD(+) serves as cofactor.

The catalysed reaction is S-adenosyl-L-homocysteine + H2O = L-homocysteine + adenosine. It participates in amino-acid biosynthesis; L-homocysteine biosynthesis; L-homocysteine from S-adenosyl-L-homocysteine: step 1/1. Adenosylhomocysteine is a competitive inhibitor of S-adenosyl-L-methionine-dependent methyl transferase reactions; therefore adenosylhomocysteinase may play a key role in the control of methylations via regulation of the intracellular concentration of adenosylhomocysteine. In Caenorhabditis elegans, this protein is Adenosylhomocysteinase (ahcy-1).